Here is an 89-residue protein sequence, read N- to C-terminus: Large ribosomal subunit protein eL31 (89 aa).

It belongs to the eukaryotic ribosomal protein eL31 family.

The chain is Large ribosomal subunit protein eL31 from Picrophilus torridus (strain ATCC 700027 / DSM 9790 / JCM 10055 / NBRC 100828 / KAW 2/3).